The following is a 1300-amino-acid chain: Histone-lysine N-methyltransferase Suv4-20 (1300 aa).

The tract at residues 1 to 136 (MVVGSNHTRR…GSGSVVSGLN (136 aa)) is disordered. Residues 14 to 62 (GSRFTNSSSSSSTSGGPTASASSTTSVTSSLATNSTSTSTAAALLSSMS) show a composition bias toward low complexity. Polar residues predominate over residues 79 to 97 (QTNQQHHQVAHSQPHATHY). A compositionally biased stretch (gly residues) spans 116 to 128 (GSGGGSAGSGSGS). Positions 255–366 (EACYRYTLEE…VGEEITCFYG (112 aa)) constitute an SET domain. 5 disordered regions span residues 432–490 (SRAN…GKEA), 535–574 (QQHHHQHHFHHHHHHHHHHHNHGQHASTGAEATAAVQQMA), 669–744 (HQSQ…SAGR), 756–856 (NNNI…TQGI), and 891–927 (ALGGFPTGSTGSQRKRAQAGEPTTSCSSTTISNVEPL). A compositionally biased stretch (low complexity) spans 435–451 (NSTNSTSNSNSNTNDST). Residues 452 to 462 (GPSETSSTNGL) show a composition bias toward polar residues. Positions 536–557 (QHHHQHHFHHHHHHHHHHHNHG) are enriched in basic residues. The span at 564–574 (AEATAAVQQMA) shows a compositional bias: low complexity. Composition is skewed to basic and acidic residues over residues 677 to 688 (RRSERQKEKLTD), 698 to 707 (QQKKEQKQQD), and 722 to 735 (QPEKSEEKQQEQQK). A compositionally biased stretch (low complexity) spans 756 to 821 (NNNIATTTNS…SSIPSSTSSE (66 aa)). 2 stretches are compositionally biased toward polar residues: residues 822–834 (NQQQQATRRSCSP) and 911–923 (EPTTSCSSTTISN). Residues Ser831 and Ser833 each carry the phosphoserine modification. At Thr930 the chain carries Phosphothreonine. Disordered stretches follow at residues 956-988 (SLSNGGAGRGAPGSHREGTAGEGSVRSALNLTG), 1006-1188 (EHGN…PNGK), 1212-1233 (SPGQGQAIVSSSSGSSGGGGSG), and 1263-1300 (QISQQKTSSGGGAGVVPTSTSTGAVTSHHHTNNHHGQK). Positions 1009-1029 (NDDDEDEEEDDEEPAAEEEEE) are enriched in acidic residues. Over residues 1041–1055 (KKQRKKQRSRSRSSQ) the composition is skewed to basic residues. Low complexity-rich tracts occupy residues 1117-1145 (ASSTSLTVNTSSSSTSSSSGVGGATSTSA) and 1161-1178 (SPSSTTSSSFQSACTSTT). The span at 1289–1300 (SHHHTNNHHGQK) shows a compositional bias: basic residues.

This sequence belongs to the class V-like SAM-binding methyltransferase superfamily. Histone-lysine methyltransferase family. Suvar4-20 subfamily.

The protein localises to the nucleus. It is found in the chromosome. The catalysed reaction is L-lysyl(20)-[histone H4] + S-adenosyl-L-methionine = N(6)-methyl-L-lysyl(20)-[histone H4] + S-adenosyl-L-homocysteine + H(+). It carries out the reaction N(6)-methyl-L-lysyl(20)-[histone H4] + S-adenosyl-L-methionine = N(6),N(6)-dimethyl-L-lysyl(20)-[histone H4] + S-adenosyl-L-homocysteine + H(+). The enzyme catalyses N(6),N(6)-dimethyl-L-lysyl(20)-[histone H4] + S-adenosyl-L-methionine = N(6),N(6),N(6)-trimethyl-L-lysyl(20)-[histone H4] + S-adenosyl-L-homocysteine + H(+). Histone methyltransferase that specifically trimethylates 'Lys-20' of histone H4. H4 'Lys-20' trimethylation represents a specific tag for epigenetic transcriptional repression. Mainly functions in pericentric heterochromatin regions, thereby playing a central role in the establishment of constitutive heterochromatin in these regions. Acts as a dominant suppressor of position-effect variegation. The sequence is that of Histone-lysine N-methyltransferase Suv4-20 (Hmt4-20) from Drosophila melanogaster (Fruit fly).